The sequence spans 516 residues: Flavin-dependent halogenase armH2 (516 aa).

Residues G16, A19, and E49 each coordinate FAD. S328 and G329 together coordinate chloride. I330 is a binding site for FAD. The segment at 440–475 (PQANGNGAAKQDAVPAPIPVALSSGAGPEKDAKRRE) is disordered.

This sequence belongs to the flavin-dependent halogenase family.

It catalyses the reaction melleolide F + FADH2 + chloride + O2 = 6'-chloromelleolide F + FAD + 2 H2O + H(+). Its function is as follows. Flavin-dependent halogenase involved in the biosynthesis of melleolides, a range of antifungal and phytotoxic polyketide derivatives composed of an orsellinic acid (OA) moiety esterified to various sesquiterpene alcohols. The halogenase catalyzes the transfer of a single chlorine atom to the melleolide backbone, resulting in a 6'-chloromelleolide product. The enzyme acts on free substrate and does not depend on carrier-protein-dependent acceptor molecules. This is Flavin-dependent halogenase armH2 from Armillaria mellea (Honey mushroom).